The sequence spans 484 residues: mRNA decay activator protein ZFP36L2 (484 aa).

Phosphoserine occurs at positions 57 and 127. The tract at residues 100-152 is disordered; the sequence is YGQLKEPSGGSGTALVTKESKFRDRSFSENGERSQHLLHLQQQQKGGSGSQIN. Residues 117-134 are compositionally biased toward basic and acidic residues; sequence KESKFRDRSFSENGERSQ. The short motif at 155 to 160 is the RNA-binding element; that stretch reads RYKTEL. 2 consecutive C3H1-type zinc fingers follow at residues 155 to 183 and 193 to 221; these read RYKT…HGFH and KYKT…HNAD. Residues 172–213 form an RNA-binding region; it reads YGEKCQFAHGFHELRSLTRHPKYKTELCRTFHTIGFCPYGPR. Disordered regions lie at residues 261-304 and 395-484; these read SLSF…SCSS and QQGL…ISDD. Positions 401-418 are enriched in pro residues; it reads PAPPPAQPPAAPAPPSPP. The span at 449-468 shows a compositional bias: low complexity; the sequence is YLSGSLSSGSLSGSESPSLD. A phosphoserine; by RPS6KA1 mark is found at Ser480 and Ser482.

In terms of assembly, associates with the cytoplasmic CCR4-NOT deadenylase to trigger ARE-containing mRNA deadenylation and decay processes. Interacts with CNOT7; this interaction is inhibited in response to phorbol 12-myristate 13-acetate (PMA) treatment in a p38 MAPK-dependent manner. Interacts with CNOT6L. In terms of processing, phosphorylated by RPS6KA1 at Ser-480 and Ser-482 upon phorbol 12-myristate 13-acetate (PMA) treatment; this phosphorylation results in dissociation of the CCR4-NOT-deadenylase complex and induces p38 MAPK-mediated stabilization of the low-density lipoprotein (LDL) receptor (LDLR) mRNA. Phosphorylation occurs during early preadipocyte differentiation. Expressed in preadipocytes and adipocytes (at protein level). Expressed at highest level in lymphoid tissues such as thymus, spleen, lung, uterus, ovary, small and large intestine, mammary gland, fat and bone marrow. Expressed at intermediate level in kidney, heart, adrenal, eye and fetal liver. Weakly expressed in brain, skeletal muscle and liver. Expressed through B lymphocyte development. Expressed in superior cervical ganglion (SCG) and dorsal root ganglion (DRG). Expressed in embryonic stem cells (ESCs). Expressed in oocytes.

Its subcellular location is the nucleus. The protein resides in the cytoplasm. In terms of biological role, zinc-finger RNA-binding protein that destabilizes several cytoplasmic AU-rich element (ARE)-containing mRNA transcripts by promoting their poly(A) tail removal or deadenylation, and hence provide a mechanism for attenuating protein synthesis. Acts as a 3'-untranslated region (UTR) ARE mRNA-binding adapter protein to communicate signaling events to the mRNA decay machinery. Functions by recruiting the CCR4-NOT deadenylase complex and probably other components of the cytoplasmic RNA decay machinery to the bound ARE-containing mRNAs, and hence promotes ARE-mediated mRNA deadenylation and decay processes. Binds to 3'-UTR ARE of numerous mRNAs. Promotes ARE-containing mRNA decay of the low-density lipoprotein (LDL) receptor (LDLR) mRNA in response to phorbol 12-myristate 13-acetate (PMA) treatment in a p38 MAPK-dependent manner. Positively regulates early adipogenesis by promoting ARE-mediated mRNA decay of immediate early genes (IEGs). Plays a role in mature peripheral neuron integrity by promoting ARE-containing mRNA decay of the transcriptional repressor REST mRNA. Plays a role in ovulation and oocyte meiotic maturation by promoting ARE-mediated mRNA decay of the luteinizing hormone receptor LHCGR mRNA. Acts as a negative regulator of erythroid cell differentiation: promotes glucocorticoid-induced self-renewal of erythroid cells by binding mRNAs that are induced or highly expressed during terminal erythroid differentiation and promotes their degradation, preventing erythroid cell differentiation. In association with ZFP36L1 maintains quiescence on developing B lymphocytes by promoting ARE-mediated decay of several mRNAs encoding cell cycle regulators that help B cells progress through the cell cycle, and hence ensuring accurate variable-diversity-joining (VDJ) recombination process and functional immune cell formation. Together with ZFP36L1 is also necessary for thymocyte development and prevention of T-cell acute lymphoblastic leukemia (T-ALL) transformation by promoting ARE-mediated mRNA decay of the oncogenic transcription factor NOTCH1 mRNA. The protein is mRNA decay activator protein ZFP36L2 of Mus musculus (Mouse).